We begin with the raw amino-acid sequence, 801 residues long: Probable phosphoketolase (801 aa).

It belongs to the XFP family. Thiamine diphosphate is required as a cofactor.

This Bradyrhizobium diazoefficiens (strain JCM 10833 / BCRC 13528 / IAM 13628 / NBRC 14792 / USDA 110) protein is Probable phosphoketolase.